We begin with the raw amino-acid sequence, 301 residues long: Phosphoglycolate phosphatase 2 (301 aa).

The Nucleophile role is filled by Asp19.

It belongs to the HAD-like hydrolase superfamily. CbbY/CbbZ/Gph/YieH family.

The catalysed reaction is 2-phosphoglycolate + H2O = glycolate + phosphate. In terms of biological role, dephosphorylates 2-phosphoglycolate, but does not contribute to photorespiratory metabolism. This Arabidopsis thaliana (Mouse-ear cress) protein is Phosphoglycolate phosphatase 2 (PGLP2).